The sequence spans 303 residues: Acetylglutamate kinase (303 aa).

Residues 76 to 77, Arg98, and Asn199 each bind substrate; that span reads GG.

It belongs to the acetylglutamate kinase family. ArgB subfamily.

It is found in the cytoplasm. It catalyses the reaction N-acetyl-L-glutamate + ATP = N-acetyl-L-glutamyl 5-phosphate + ADP. The protein operates within amino-acid biosynthesis; L-arginine biosynthesis; N(2)-acetyl-L-ornithine from L-glutamate: step 2/4. In terms of biological role, catalyzes the ATP-dependent phosphorylation of N-acetyl-L-glutamate. This is Acetylglutamate kinase from Clavibacter michiganensis subsp. michiganensis (strain NCPPB 382).